The following is a 192-amino-acid chain: Ribosome maturation factor RimP (192 aa).

Belongs to the RimP family.

It localises to the cytoplasm. In terms of biological role, required for maturation of 30S ribosomal subunits. This Mycobacterium sp. (strain JLS) protein is Ribosome maturation factor RimP.